Reading from the N-terminus, the 379-residue chain is Cytochrome b (379 aa).

The next 4 membrane-spanning stretches (helical) occupy residues 33–53 (LGSLLGTCLIMQILTGLFLAM), 77–98 (WTIRHLHANGASMFFMCLYLHI), 113–133 (WNTGVMLLLTVMATAFMGYVL), and 178–198 (FFTLHFIAPFIILALVLTHLL). Heme b contacts are provided by H83 and H97. 2 residues coordinate heme b: H182 and H196. H201 contacts a ubiquinone. 4 helical membrane-spanning segments follow: residues 226-246 (IKDILGLLIMILTTLALTLLH), 288-308 (LGGVLTLICSILVLVIIPMTH), 320-340 (ISQCLFWILTADLLILTWIGG), and 347-367 (FTTIGLLASILYFTTILILTP).

Belongs to the cytochrome b family. As to quaternary structure, the cytochrome bc1 complex contains 11 subunits: 3 respiratory subunits (MT-CYB, CYC1 and UQCRFS1), 2 core proteins (UQCRC1 and UQCRC2) and 6 low-molecular weight proteins (UQCRH/QCR6, UQCRB/QCR7, UQCRQ/QCR8, UQCR10/QCR9, UQCR11/QCR10 and a cleavage product of UQCRFS1). This cytochrome bc1 complex then forms a dimer. Requires heme b as cofactor.

The protein resides in the mitochondrion inner membrane. In terms of biological role, component of the ubiquinol-cytochrome c reductase complex (complex III or cytochrome b-c1 complex) that is part of the mitochondrial respiratory chain. The b-c1 complex mediates electron transfer from ubiquinol to cytochrome c. Contributes to the generation of a proton gradient across the mitochondrial membrane that is then used for ATP synthesis. The sequence is that of Cytochrome b (MT-CYB) from Bradypus tridactylus (Pale-throated three-toed sloth).